The chain runs to 416 residues: Lysosome-associated membrane glycoprotein 3 (416 aa).

The signal sequence occupies residues 1-27 (MPRQLSAAAALFASLAVILHDGSQMRA). Topologically, residues 28–381 (KAFPETRDYS…NVDECSSDYT (354 aa)) are lumenal. N-linked (GlcNAc...) asparagine glycosylation is found at N112, N158, N164, N200, N232, N266, and N291. Disordered regions lie at residues 136–167 (PTITPPAHTTGTSSSTVSHTTGNTTQPSNQTT) and 179–219 (STTG…LAPQ). Low complexity predominate over residues 143 to 160 (HTTGTSSSTVSHTTGNTT). Residues 188–208 (PTHAPGTTAAAHNTTRTAAPA) show a composition bias toward low complexity. C237 and C274 are disulfide-bonded. C339 and C376 are oxidised to a cystine. A helical transmembrane segment spans residues 382 to 402 (IVLPVIGAIVVGLCLMGMGVY). Residues 403–416 (KIRLRCQSSGYQRI) lie on the Cytoplasmic side of the membrane.

This sequence belongs to the LAMP family. Monomer. Interacts with FURIN. In terms of assembly, (Microbial infection) Interacts with mumps virus protein F; this interaction promotes protein F cleavage by FURIN. Detected in tonsil interdigitating dendritic cells, in spleen, lymph node, Peyer's patches in the small instestine, in thymus medulla and in B-cells (at protein level). Expressed in lymphoid organs and dendritic cells. Expressed in lung. Up-regulated in carcinomas of the esophagus, colon, rectum, ureter, stomach, breast, fallopian tube, thyroid and parotid tissues.

It is found in the cell surface. It localises to the lysosome membrane. Its subcellular location is the cytoplasmic vesicle membrane. The protein resides in the early endosome membrane. In terms of biological role, lysosomal membrane glycoprotein which plays a role in the unfolded protein response (UPR) that contributes to protein degradation and cell survival during proteasomal dysfunction. Plays a role in the process of fusion of the lysosome with the autophagosome, thereby modulating the autophagic process. Promotes hepatocellular lipogenesis through activation of the PI3K/Akt pathway. May also play a role in dendritic cell function and in adaptive immunity. (Microbial infection) Plays a positive role in post-entry steps of influenza A virus replication, either virus uncoating, cytosolic transport, or nuclear import of viral components, and promotes nuclear accumulation of influenza nucleoprotein/NP at early stages of viral infection. Its function is as follows. (Microbial infection) Supports the FURIN-mediated cleavage of mumps virus fusion protein F by interacting with both FURIN and the unprocessed form but not the processed form of the viral protein F. Functionally, (Microbial infection) Promotes the intracellular proliferation of Salmonella typhimuium. The polypeptide is Lysosome-associated membrane glycoprotein 3 (LAMP3) (Homo sapiens (Human)).